The following is a 434-amino-acid chain: Putative neutral sphingomyelinase (434 aa).

Glu-83 is a binding site for Mg(2+). His-318 functions as the Proton acceptor in the catalytic mechanism. A run of 2 helical transmembrane segments spans residues Ile-366–Phe-388 and Phe-392–Leu-414.

This sequence belongs to the neutral sphingomyelinase family.

It is found in the membrane. It carries out the reaction an N-(acyl)-sphingosylphosphocholine + H2O = an N-acyl-sphingoid base + phosphocholine + H(+). The catalysed reaction is a sphingomyelin + H2O = phosphocholine + an N-acylsphing-4-enine + H(+). The enzyme catalyses an N-acyl-15-methylhexadecasphing-4-enine-1-phosphocholine + H2O = an N-acyl-15-methylhexadecasphing-4-enine + phosphocholine + H(+). The protein operates within lipid metabolism; sphingolipid metabolism. Catalyzes the hydrolysis of sphingomyelin producing a ceramide (N-acyl-sphingoid base) and a phosphocholine. C.elegans contain specific sphingoid bases, which are unique or different in structure compared to the sphingoid bases found in other animals. Two examples of these distinctive compounds are: 15-methylhexadecasphinganine and 15-methylhexadecasphing-4-enine. This is Putative neutral sphingomyelinase from Caenorhabditis elegans.